Here is a 431-residue protein sequence, read N- to C-terminus: PHD finger-containing protein 1 (431 aa).

A PHD-type zinc finger spans residues 7–59; it reads GPVCQTCGDIGFEEALVFCDSCMFESIHRYCLGITPIPFTEYITWICEDCDNS. The Zn(2+) site is built by Cys-10, Cys-13, Cys-25, Cys-28, His-34, Cys-37, Cys-53, and Cys-56. The disordered stretch occupies residues 125 to 221; it reads EAADSSSVPD…QESSDSRKPH (97 aa). The segment covering 128–139 has biased composition (polar residues); the sequence is DSSSVPDHSSCT. Basic residues predominate over residues 160–171; it reads KKKKKKKKKKSI. Positions 191–202 are enriched in low complexity; sequence VVEPVEVSSSSP. Residues 205–221 are compositionally biased toward basic and acidic residues; sequence ETMESKRQESSDSRKPH.

In terms of assembly, interacts directly with AIPP3/BDT1.

Functionally, together with AIPP3/BDT1, cooperates to form a BAH-PHD bivalent histone reader complex able to read histone H3 lysine 27 trimethylation (H3K27me3) histone marks in order to regulate transcription, especially to prevent early flowering; promotes AIPP3/BDT1 binding to H3K27me3. In Arabidopsis thaliana (Mouse-ear cress), this protein is PHD finger-containing protein 1.